The following is a 257-amino-acid chain: Zinc transporter ZupT (257 aa).

8 helical membrane-spanning segments follow: residues leucine 5 to glycine 25, leucine 33 to leucine 53, glycine 61 to leucine 81, alanine 109 to valine 129, leucine 137 to alanine 157, isoleucine 171 to isoleucine 191, leucine 195 to leucine 215, and glycine 236 to isoleucine 256. Fe(2+) contacts are provided by asparagine 120 and glutamate 123. Glutamate 123 and histidine 148 together coordinate Zn(2+). Fe(2+) is bound by residues asparagine 149, glutamate 152, and glutamate 181. A Zn(2+)-binding site is contributed by glutamate 152.

This sequence belongs to the ZIP transporter (TC 2.A.5) family. ZupT subfamily.

It is found in the cell inner membrane. The enzyme catalyses Zn(2+)(in) = Zn(2+)(out). In terms of biological role, mediates zinc uptake. May also transport other divalent cations. The chain is Zinc transporter ZupT from Salmonella paratyphi A (strain ATCC 9150 / SARB42).